A 257-amino-acid polypeptide reads, in one-letter code: MKNKSKLLACCLMALPISSFSIGNNNLIGVGVSAGNSIYQVKKKTAVEPFLMLDLSFGNFYMRGAAGLSELGYQHVFTPSFSTSLFLSPFDGAPIKRKDLKPGYDSIQDRKTQVAVGLGLDYDLSDLFNLPNTNISLEMKKGRRGFNSDITLTRTFMLTDKLSISPSFGLSYYSAKYTNYYFGIKKAELNKTKLKSVYHPKKAYSGHIALNSHYAITDHIGMGLSFSWETYSKAIKKSPIVKRSGEISSALNFYYMF.

The first 21 residues, 1 to 21 (MKNKSKLLACCLMALPISSFS), serve as a signal peptide directing secretion.

It belongs to the MipA/OmpV family.

It localises to the cell outer membrane. This is 24 kDa outer membrane protein from Pasteurella multocida (strain Pm70).